A 222-amino-acid chain; its full sequence is MRTWTDVIGSEKEQDYFKATLATVRSEREAGKVIYPPATEVFNAFKLTELDQVKVVILGQDPYHGPNQAHGLCFSVLPGVRTPPSLVNIYKEMQRDLPDFVTPNHGFLESWAQQGVLLLNTVLTVQAGMAHSHAHLGWETFTDRVIEQINASCQGVVFLLWGAHAQKKGRFIDRSRHHVLSAPHPSPLSAHRGFIGCGHFSETNRLLSQQGMSPINWHSVCG.

Asp61 acts as the Proton acceptor in catalysis.

It belongs to the uracil-DNA glycosylase (UDG) superfamily. UNG family.

The protein localises to the cytoplasm. It carries out the reaction Hydrolyzes single-stranded DNA or mismatched double-stranded DNA and polynucleotides, releasing free uracil.. Functionally, excises uracil residues from the DNA which can arise as a result of misincorporation of dUMP residues by DNA polymerase or due to deamination of cytosine. This Aeromonas salmonicida (strain A449) protein is Uracil-DNA glycosylase.